The chain runs to 758 residues: DNA ligase (758 aa).

The segment at 1 to 28 is disordered; sequence MPENFGAMRQDGLVSTSESDSPAPAATP. NAD(+) contacts are provided by residues 60-64, 109-110, and Glu148; these read DAEFD and SL. The active-site N6-AMP-lysine intermediate is Lys150. NAD(+) contacts are provided by Arg171, Glu208, Lys324, and Lys348. Zn(2+)-binding residues include Cys442, Cys445, Cys461, and Cys467. Residues 660–749 form the BRCT domain; the sequence is SVRRTLAGLT…PDHSAEAEEN (90 aa). The interval 735-758 is disordered; the sequence is LLAHGPDHSAEAEENESEGSTTND.

This sequence belongs to the NAD-dependent DNA ligase family. LigA subfamily. Requires Mg(2+) as cofactor. It depends on Mn(2+) as a cofactor.

It catalyses the reaction NAD(+) + (deoxyribonucleotide)n-3'-hydroxyl + 5'-phospho-(deoxyribonucleotide)m = (deoxyribonucleotide)n+m + AMP + beta-nicotinamide D-nucleotide.. DNA ligase that catalyzes the formation of phosphodiester linkages between 5'-phosphoryl and 3'-hydroxyl groups in double-stranded DNA using NAD as a coenzyme and as the energy source for the reaction. It is essential for DNA replication and repair of damaged DNA. In Renibacterium salmoninarum (strain ATCC 33209 / DSM 20767 / JCM 11484 / NBRC 15589 / NCIMB 2235), this protein is DNA ligase.